A 436-amino-acid polypeptide reads, in one-letter code: Septin-7 (436 aa).

S2 carries the N-acetylserine modification. Y29 carries the phosphotyrosine modification. A Septin-type G domain is found at 46-315; that stretch reads RGFEFTLMVV…ENYRSRKLAA (270 aa). The interval 46-316 is interaction with SEPTIN12; that stretch reads RGFEFTLMVV…NYRSRKLAAV (271 aa). Positions 56 to 63 are G1 motif; it reads GESGLGKS. GTP is bound at residue 56–63; that stretch reads GESGLGKS. S76 is modified (phosphoserine). GTP contacts are provided by residues T89, G115, and 194–202; that span reads KADTLTPEE. Residues 112-115 form a G3 motif region; that stretch reads DTPG. Residues 193–196 are G4 motif; sequence AKAD. A Phosphothreonine modification is found at T227. G249 and R264 together coordinate GTP. Positions 331–436 form a coiled coil; it reads TKSPLAQMEE…EKNKKKGKIF (106 aa). Residue S333 is modified to Phosphoserine. K372 bears the N6-acetyllysine mark. Residues 377 to 409 show a composition bias toward basic and acidic residues; the sequence is ELQRRHEQMKKNLEAQHKELEEKRRQFEEEKAN. Residues 377 to 436 are disordered; the sequence is ELQRRHEQMKKNLEAQHKELEEKRRQFEEEKANWEAQQRILEQQNSSRTLEKNKKKGKIF. Residue S423 is modified to Phosphoserine. T425 carries the post-translational modification Phosphothreonine.

The protein belongs to the TRAFAC class TrmE-Era-EngA-EngB-Septin-like GTPase superfamily. Septin GTPase family. Septins polymerize into heterooligomeric protein complexes that form filaments, and associate with cellular membranes, actin filaments and microtubules. GTPase activity is required for filament formation. Filaments are assembled from asymmetrical heterotrimers, composed of SEPTIN2, SEPTIN6 and SEPTIN7 that associate head-to-head to form a hexameric unit. Within the trimer, directly interacts with SEPTIN6, while interaction with SEPTIN2 seems indirect. In the absence of SEPTIN6, forms homodimers. Interacts directly with CENPE and links CENPE to septin filaments composed of SEPTIN2, SEPTIN6 and SEPTIN7. Interacts with SEPTIN5. Component of a septin core octameric complex consisting of SEPTIN12, SEPTIN7, SEPTIN6 and SEPTIN2 or SEPTIN4 in the order 12-7-6-2-2-6-7-12 or 12-7-6-4-4-6-7-12 and located in the sperm annulus; the SEPTIN12:SEPTIN7 association is mediated by the respective GTP-binding domains. Interacts with SEPTIN2, SEPTIN7, SEPTIN8, SEPTIN9 and SEPTIN11.

It localises to the cytoplasm. The protein localises to the chromosome. Its subcellular location is the centromere. The protein resides in the kinetochore. It is found in the cytoskeleton. It localises to the spindle. The protein localises to the cleavage furrow. Its subcellular location is the midbody. The protein resides in the cilium axoneme. It is found in the cell projection. It localises to the cilium. The protein localises to the flagellum. Its function is as follows. Filament-forming cytoskeletal GTPase. Required for normal organization of the actin cytoskeleton. Required for normal progress through mitosis. Involved in cytokinesis. Required for normal association of CENPE with the kinetochore. Plays a role in ciliogenesis and collective cell movements. Forms a filamentous structure with SEPTIN12, SEPTIN6, SEPTIN2 and probably SEPTIN4 at the sperm annulus which is required for the structural integrity and motility of the sperm tail during postmeiotic differentiation. In Rattus norvegicus (Rat), this protein is Septin-7.